Consider the following 20-residue polypeptide: Cytochrome c oxidase subunit 8B, mitochondrial (20 aa).

The interval 1–20 is disordered; the sequence is LSGKPAKXHLSVGEQAIAMT.

It belongs to the cytochrome c oxidase VIII family. Component of the cytochrome c oxidase (complex IV, CIV), a multisubunit enzyme composed of 14 subunits. The complex is composed of a catalytic core of 3 subunits MT-CO1, MT-CO2 and MT-CO3, encoded in the mitochondrial DNA, and 11 supernumerary subunits COX4I, COX5A, COX5B, COX6A, COX6B, COX6C, COX7A, COX7B, COX7C, COX8 and NDUFA4, which are encoded in the nuclear genome. The complex exists as a monomer or a dimer and forms supercomplexes (SCs) in the inner mitochondrial membrane with NADH-ubiquinone oxidoreductase (complex I, CI) and ubiquinol-cytochrome c oxidoreductase (cytochrome b-c1 complex, complex III, CIII), resulting in different assemblies (supercomplex SCI(1)III(2)IV(1) and megacomplex MCI(2)III(2)IV(2)).

The protein resides in the mitochondrion inner membrane. The protein operates within energy metabolism; oxidative phosphorylation. Component of the cytochrome c oxidase, the last enzyme in the mitochondrial electron transport chain which drives oxidative phosphorylation. The respiratory chain contains 3 multisubunit complexes succinate dehydrogenase (complex II, CII), ubiquinol-cytochrome c oxidoreductase (cytochrome b-c1 complex, complex III, CIII) and cytochrome c oxidase (complex IV, CIV), that cooperate to transfer electrons derived from NADH and succinate to molecular oxygen, creating an electrochemical gradient over the inner membrane that drives transmembrane transport and the ATP synthase. Cytochrome c oxidase is the component of the respiratory chain that catalyzes the reduction of oxygen to water. Electrons originating from reduced cytochrome c in the intermembrane space (IMS) are transferred via the dinuclear copper A center (CU(A)) of subunit 2 and heme A of subunit 1 to the active site in subunit 1, a binuclear center (BNC) formed by heme A3 and copper B (CU(B)). The BNC reduces molecular oxygen to 2 water molecules using 4 electrons from cytochrome c in the IMS and 4 protons from the mitochondrial matrix. The polypeptide is Cytochrome c oxidase subunit 8B, mitochondrial (Oncorhynchus mykiss (Rainbow trout)).